Reading from the N-terminus, the 170-residue chain is Ribosome maturation factor RimM (170 aa).

The 73-residue stretch at Pro98–Phe170 folds into the PRC barrel domain.

Belongs to the RimM family. Binds ribosomal protein uS19.

Its subcellular location is the cytoplasm. In terms of biological role, an accessory protein needed during the final step in the assembly of 30S ribosomal subunit, possibly for assembly of the head region. Essential for efficient processing of 16S rRNA. May be needed both before and after RbfA during the maturation of 16S rRNA. It has affinity for free ribosomal 30S subunits but not for 70S ribosomes. This Xanthomonas axonopodis pv. citri (strain 306) protein is Ribosome maturation factor RimM.